The chain runs to 201 residues: Ubiquinone biosynthesis accessory factor UbiJ (201 aa).

Residues 15–112 enclose the SCP2 domain; sequence LNTFLYRSPA…QVVQNFVALA (98 aa).

Belongs to the UbiJ family. As to quaternary structure, component of the Ubi complex metabolon, which regroups five ubiquinone biosynthesis proteins (UbiE, UbiF, UbiG, UbiH and UbiI) and two accessory factors (UbiK and the lipid-binding protein UbiJ). Interacts with UbiK and forms a complex composed of 2 UbiK subunits and 1 UbiJ subunit. The UbiK-UbiJ complex interacts with palmitoleic acid.

The protein localises to the cytoplasm. It participates in cofactor biosynthesis; ubiquinone biosynthesis. Functionally, required for ubiquinone (coenzyme Q) biosynthesis under aerobic conditions. Binds hydrophobic ubiquinone biosynthetic intermediates via its SCP2 domain and is essential for the stability of the Ubi complex. May constitute a docking platform where Ubi enzymes assemble and access their SCP2-bound polyprenyl substrates. The protein is Ubiquinone biosynthesis accessory factor UbiJ of Escherichia coli (strain K12).